Reading from the N-terminus, the 504-residue chain is ATP synthase subunit alpha 2 (504 aa).

Residue 169–176 coordinates ATP; that stretch reads GDRQTGKT.

Belongs to the ATPase alpha/beta chains family. F-type ATPases have 2 components, CF(1) - the catalytic core - and CF(0) - the membrane proton channel. CF(1) has five subunits: alpha(3), beta(3), gamma(1), delta(1), epsilon(1). CF(0) has three main subunits: a(1), b(2) and c(9-12). The alpha and beta chains form an alternating ring which encloses part of the gamma chain. CF(1) is attached to CF(0) by a central stalk formed by the gamma and epsilon chains, while a peripheral stalk is formed by the delta and b chains.

The protein localises to the cell membrane. The enzyme catalyses ATP + H2O + 4 H(+)(in) = ADP + phosphate + 5 H(+)(out). Functionally, produces ATP from ADP in the presence of a proton gradient across the membrane. The alpha chain is a regulatory subunit. The protein is ATP synthase subunit alpha 2 of Listeria innocua serovar 6a (strain ATCC BAA-680 / CLIP 11262).